A 357-amino-acid polypeptide reads, in one-letter code: Fructose-bisphosphate aldolase, cytoplasmic isozyme 1 (357 aa).

Substrate is bound by residues arginine 52 and lysine 142. The active-site Proton acceptor is glutamate 183. Lysine 225 serves as the catalytic Schiff-base intermediate with dihydroxyacetone-P.

This sequence belongs to the class I fructose-bisphosphate aldolase family.

Its subcellular location is the cytoplasm. It catalyses the reaction beta-D-fructose 1,6-bisphosphate = D-glyceraldehyde 3-phosphate + dihydroxyacetone phosphate. It participates in carbohydrate degradation; glycolysis; D-glyceraldehyde 3-phosphate and glycerone phosphate from D-glucose: step 4/4. In Pisum sativum (Garden pea), this protein is Fructose-bisphosphate aldolase, cytoplasmic isozyme 1.